Reading from the N-terminus, the 359-residue chain is Ribosomal RNA small subunit methyltransferase H (359 aa).

S-adenosyl-L-methionine-binding positions include 39 to 41 (AGH), Asp58, Phe87, Asp108, and Gln115. Residues 339–359 (IQGSASPGRAKNTARIRTRRG) form a disordered region. Residues 350-359 (NTARIRTRRG) are compositionally biased toward basic residues.

The protein belongs to the methyltransferase superfamily. RsmH family.

Its subcellular location is the cytoplasm. The enzyme catalyses cytidine(1402) in 16S rRNA + S-adenosyl-L-methionine = N(4)-methylcytidine(1402) in 16S rRNA + S-adenosyl-L-homocysteine + H(+). Its function is as follows. Specifically methylates the N4 position of cytidine in position 1402 (C1402) of 16S rRNA. This Bifidobacterium longum subsp. infantis (strain ATCC 15697 / DSM 20088 / JCM 1222 / NCTC 11817 / S12) protein is Ribosomal RNA small subunit methyltransferase H.